A 277-amino-acid polypeptide reads, in one-letter code: NAD kinase (277 aa).

Asp55 functions as the Proton acceptor in the catalytic mechanism. NAD(+) is bound by residues 55–56 (DG), 131–132 (NE), Arg157, Asp159, and 170–175 (TAYNKS).

It belongs to the NAD kinase family. Requires a divalent metal cation as cofactor.

It localises to the cytoplasm. The catalysed reaction is NAD(+) + ATP = ADP + NADP(+) + H(+). In terms of biological role, involved in the regulation of the intracellular balance of NAD and NADP, and is a key enzyme in the biosynthesis of NADP. Catalyzes specifically the phosphorylation on 2'-hydroxyl of the adenosine moiety of NAD to yield NADP. The sequence is that of NAD kinase from Streptococcus mutans serotype c (strain ATCC 700610 / UA159).